Here is a 333-residue protein sequence, read N- to C-terminus: tRNA-modifying protein YgfZ (333 aa).

Residues tryptophan 33 and tryptophan 195 each coordinate folate.

Belongs to the tRNA-modifying YgfZ family.

The protein resides in the cytoplasm. Functionally, folate-binding protein involved in regulating the level of ATP-DnaA and in the modification of some tRNAs. It is probably a key factor in regulatory networks that act via tRNA modification, such as initiation of chromosomal replication. This Pectobacterium carotovorum subsp. carotovorum (strain PC1) protein is tRNA-modifying protein YgfZ.